Reading from the N-terminus, the 312-residue chain is MAATGGRRCRRLEGETARAVLANVDTLLFDCDGVLWRGEAALSGAPAALGRLAAAGKRLCYVTNNSSRTRVAYTEKLRRLGFPPAEPRHVFGSAFCAARYLRQALPPGAAAYVLGGPALSAELEAAGIPHLGPGPAALPGPAPADWAQAPLEPAVRAVLVGFDEHFSYAKLCQALRYLLRGPDCLLVGTNRDNRLPLEGGSAIPGTGCLVKAVETAAEREALIVGKPSRYIFDCVASEFDIDPARTIMVGDRLDTDILMGNTCGLTTLLTLTGVSTLEEVRGHQESDCPARQGLVPDYYVDSIADLLPALED.

D30 acts as the Nucleophile in catalysis. The Mg(2+) site is built by D30, D32, and D251. D32 functions as the Proton donor in the catalytic mechanism.

This sequence belongs to the HAD-like hydrolase superfamily. CbbY/CbbZ/Gph/YieH family. In terms of assembly, homodimer. The cofactor is Mg(2+).

It carries out the reaction O-phospho-L-tyrosyl-[protein] + H2O = L-tyrosyl-[protein] + phosphate. The catalysed reaction is sn-glycerol 1-phosphate + H2O = glycerol + phosphate. It catalyses the reaction sn-glycerol 3-phosphate + H2O = glycerol + phosphate. Its function is as follows. Glycerol-3-phosphate phosphatase hydrolyzing glycerol-3-phosphate into glycerol. Thereby, regulates the cellular levels of glycerol-3-phosphate a metabolic intermediate of glucose, lipid and energy metabolism. Was also shown to have a 2-phosphoglycolate phosphatase activity and a tyrosine-protein phosphatase activity. However, their physiological relevance is unclear. In vitro, also has a phosphatase activity toward ADP, ATP, GDP and GTP. This chain is Glycerol-3-phosphate phosphatase, found in Gallus gallus (Chicken).